Consider the following 375-residue polypeptide: Methylthioribose-1-phosphate isomerase (375 aa).

The Proton donor role is filled by aspartate 257.

It belongs to the eIF-2B alpha/beta/delta subunits family. MtnA subfamily.

The protein localises to the cytoplasm. It localises to the nucleus. It catalyses the reaction 5-(methylsulfanyl)-alpha-D-ribose 1-phosphate = 5-(methylsulfanyl)-D-ribulose 1-phosphate. It functions in the pathway amino-acid biosynthesis; L-methionine biosynthesis via salvage pathway; L-methionine from S-methyl-5-thio-alpha-D-ribose 1-phosphate: step 1/6. Catalyzes the interconversion of methylthioribose-1-phosphate (MTR-1-P) into methylthioribulose-1-phosphate (MTRu-1-P). This Leishmania major protein is Methylthioribose-1-phosphate isomerase.